Here is an 800-residue protein sequence, read N- to C-terminus: Integrin beta-5 (800 aa).

The N-terminal stretch at 1–24 (MPRAPALLFSCLLGLCALVPRLPG) is a signal peptide. The Extracellular segment spans residues 25–722 (LNICTSGSAT…PECGTAPSAM (698 aa)). Positions 27–76 (ICTSGSATSCEECLLIHPKCAWCFKEDFGSLRSVTSRCDLKANLIRNGCG) constitute a PSI domain. 19 disulfide bridges follow: C28/C46, C36/C463, C39/C64, C49/C75, C202/C211, C259/C300, C401/C413, C433/C461, C465/C484, C476/C487, C489/C498, C500/C530, C513/C528, C522/C533, C535/C548, C550/C571, C555/C569, C563/C574, and C576/C585. The region spanning 136 to 378 (YPVDLYYLMD…QLIINAYNSI (243 aa)) is the VWFA domain. S147 and S149 together coordinate Mg(2+). 4 residues coordinate Ca(2+): S149, D152, D153, and D184. Ca(2+) contacts are provided by N242, D244, P246, and E247. E247 contacts Mg(2+). The N-linked (GlcNAc...) asparagine glycan is linked to N347. G362 is a binding site for Ca(2+). 4 I-EGF domains span residues 465–499 (CSAG…TRCE), 500–549 (CQEG…SFCE), 550–586 (CDNF…DNCN), and 587–626 (CSTD…ETCE). A glycan (N-linked (GlcNAc...) asparagine) is linked at N479. A glycan (N-linked (GlcNAc...) asparagine) is linked at N552. N-linked (GlcNAc...) asparagine glycosylation is present at N586. Disulfide bonds link C587-C610, C594-C608, C602-C613, C615-C625, C628-C631, C635-C683, C641-C662, C644-C658, and C691-C715. N655 and N706 each carry an N-linked (GlcNAc...) asparagine glycan. The helical transmembrane segment at 723-743 (TILLAVVGSILLTGFALLVIW) threads the bilayer. The Cytoplasmic segment spans residues 744–800 (KLLVTIHDRREFAKFQSERSRARYEMASNPLYRKPISTHTVDFTFNKFNKSYNGTVD). S771 is subject to Phosphoserine.

This sequence belongs to the integrin beta chain family. As to quaternary structure, heterodimer of an alpha and a beta subunit. Beta-5 (ITGB5) associates with alpha-V (ITGAV). Interacts with MYO10. Interacts with DAB2. Integrin ITGAV:ITGB5 interacts with FBLN5 (via N-terminus). ITGAV:ITGB5 interacts with CCN3. Interacts with tensin TNS3; TNS3 also interacts with PEAK1, thus acting as an adapter molecule to bridge the association of PEAK1 with ITGB5.

The protein localises to the cell membrane. Its function is as follows. Integrin alpha-V/beta-5 (ITGAV:ITGB5) is a receptor for fibronectin. It recognizes the sequence R-G-D in its ligand. The polypeptide is Integrin beta-5 (ITGB5) (Bos taurus (Bovine)).